A 69-amino-acid chain; its full sequence is Conotoxin Eb6.21 (69 aa).

An N-terminal signal peptide occupies residues Val1–Ala17. Residues Glu18–Arg41 constitute a propeptide that is removed on maturation. 3 disulfide bridges follow: Cys43–Cys57, Cys50–Cys61, and Cys56–Cys68.

It belongs to the conotoxin O1 superfamily. As to expression, expressed by the venom duct.

The protein localises to the secreted. In Conus ebraeus (Hebrew cone), this protein is Conotoxin Eb6.21 (E1).